The primary structure comprises 327 residues: Selenate reductase subunit beta (327 aa).

4Fe-4S ferredoxin-type domains are found at residues 6–35 (LAYV…RDGR), 124–155 (NHYF…KREE), and 157–186 (GLVV…FNLQ). 7 residues coordinate [4Fe-4S] cluster: C15, C18, C21, C25, C133, C136, and C141. [3Fe-4S] cluster-binding residues include C145, C166, and C172. C176, C193, C196, C208, and C212 together coordinate [4Fe-4S] cluster.

As to quaternary structure, heterotrimer of alpha (SerA), beta (SerB) and gamma (SerC) subunits. [3Fe-4S] cluster is required as a cofactor. [4Fe-4S] cluster serves as cofactor.

It localises to the periplasm. The catalysed reaction is selenite + 2 Fe(III)-[cytochrome c] + H2O = 2 Fe(II)-[cytochrome] + selenate + 2 H(+). Enzyme isolated from cells grown in a tungstate rich environment shows a 20-fold reduction in selenate reductase activity. Component of the selenate reductase, which catalyzes the reduction of selenate to selenite and allows anaerobic growth with selenate as the sole terminal electron acceptor. A c-type di-heme cytochrome of the cytc4 family was shown to donate electrons to the selenate reductase in vitro. SerABC can also use reduced benzyl viologen or reduced methyl viologen as an electron donor. This subunit transfers electrons from SerC to SerA. The reductase is specific for selenate, and cannot reduce nitrate, nitrite, chlorate or sulfate. This is Selenate reductase subunit beta from Thauera selenatis.